A 109-amino-acid polypeptide reads, in one-letter code: Small ribosomal subunit protein uS17 (109 aa).

This sequence belongs to the universal ribosomal protein uS17 family. In terms of assembly, part of the 30S ribosomal subunit.

Its function is as follows. One of the primary rRNA binding proteins, it binds specifically to the 5'-end of 16S ribosomal RNA. The chain is Small ribosomal subunit protein uS17 from Thermoplasma volcanium (strain ATCC 51530 / DSM 4299 / JCM 9571 / NBRC 15438 / GSS1).